Here is an 85-residue protein sequence, read N- to C-terminus: Putative regulatory protein Dtur_1444 (85 aa).

It belongs to the RemA family.

The polypeptide is Putative regulatory protein Dtur_1444 (Dictyoglomus turgidum (strain DSM 6724 / Z-1310)).